Reading from the N-terminus, the 2439-residue chain is Centrosomal protein of 290 kDa (2439 aa).

Coiled coils occupy residues 75 to 913 (AEQA…VVTE) and 1271 to 1576 (NTML…YMDT). Disordered stretches follow at residues 1802–1824 (ETLN…EKEA), 1867–1890 (ELDR…KSSK), and 2017–2048 (ESRL…FQKE). The segment covering 2039 to 2048 (SQREHEFQKE) has biased composition (basic and acidic residues). A coiled-coil region spans residues 2046 to 2394 (QKENLRLSTE…KLTQELKHFD (349 aa)).

Part of the tectonic-like complex (also named B9 complex).

The protein localises to the cytoplasm. It is found in the cytoskeleton. Its subcellular location is the microtubule organizing center. The protein resides in the centrosome. It localises to the centriolar satellite. The protein localises to the nucleus. It is found in the cilium basal body. Functionally, involved in early and late steps in cilia formation. May play a role in early ciliogenesis in the disappearance of centriolar satellites and in the transition of primary ciliar vesicles (PCVs) to capped ciliary vesicles (CCVs). In the ciliary transition zone is part of the tectonic-like complex which is required for tissue-specific ciliogenesis and may regulate ciliary membrane composition. Involved in regulation of the BBSome complex integrity and in ciliary targeting of selected BBSome cargos. Required for the correct localization of ciliary and phototransduction proteins in retinal photoreceptor cells; may play a role in ciliary transport processes. Involved in development of the nervous system and kidney. The chain is Centrosomal protein of 290 kDa (cep290) from Danio rerio (Zebrafish).